Here is a 120-residue protein sequence, read N- to C-terminus: UPF0344 protein BCAH187_A1308 (120 aa).

4 consecutive transmembrane segments (helical) span residues 6-26, 32-52, 64-84, and 91-111; these read ITAW…YSAG, VHMG…WLYL, WYGL…MVLV, and ATGA…YLGL.

The protein belongs to the UPF0344 family.

It localises to the cell membrane. This Bacillus cereus (strain AH187) protein is UPF0344 protein BCAH187_A1308.